The sequence spans 281 residues: MEIFNTVASLKNFVAHARAERKTIGLVPTMGALHRGHISLIHRAVAECDICVASVFVNPTQFNDKRDLECYPRTPEADAAVLAEAGCHAVFMPSVEEVYPEPDTRVFDLGSVAEVMEGKHRPGHFNGVAQVVSKLFMMVEPDKAYFGEKDFQQIAVIRSMVNLLGLPVTIVACPIIREEDGLALSSRNVRLGSEERAIAPSIARILGQSRTLRPAHTPEAVTRWVTESLNALPHLQVEYFEIVDGNSLQRIDNWQDTDHAVGCITVYCGEVRLIDNIKYED.

30–37 (MGALHRGH) contacts ATP. The Proton donor role is filled by H37. Q61 provides a ligand contact to (R)-pantoate. Beta-alanine is bound at residue Q61. ATP is bound at residue 147-150 (GEKD). (R)-pantoate is bound at residue Q153. ATP-binding positions include I176 and 184 to 187 (LSSR).

This sequence belongs to the pantothenate synthetase family. In terms of assembly, homodimer.

The protein resides in the cytoplasm. The catalysed reaction is (R)-pantoate + beta-alanine + ATP = (R)-pantothenate + AMP + diphosphate + H(+). The protein operates within cofactor biosynthesis; (R)-pantothenate biosynthesis; (R)-pantothenate from (R)-pantoate and beta-alanine: step 1/1. In terms of biological role, catalyzes the condensation of pantoate with beta-alanine in an ATP-dependent reaction via a pantoyl-adenylate intermediate. The chain is Pantothenate synthetase from Porphyromonas gingivalis (strain ATCC 33277 / DSM 20709 / CIP 103683 / JCM 12257 / NCTC 11834 / 2561).